The following is a 166-amino-acid chain: Interferon gamma (166 aa).

The N-terminal stretch at 1 to 23 (MSYTTYFLAFQLCVTLCFSGSYC) is a signal peptide. Position 24 is a pyrrolidone carboxylic acid (Gln24). N-linked (GlcNAc...) asparagine glycans are attached at residues Asn39 and Asn106.

The protein belongs to the type II (or gamma) interferon family. As to quaternary structure, homodimer. Interacts with IFNGR1 (via extracellular domain); this interaction promotes IFNGR1 dimerization. In terms of tissue distribution, released primarily from activated T lymphocytes.

It is found in the secreted. Type II interferon produced by immune cells such as T-cells and NK cells that plays crucial roles in antimicrobial, antiviral, and antitumor responses by activating effector immune cells and enhancing antigen presentation. Primarily signals through the JAK-STAT pathway after interaction with its receptor IFNGR1 to affect gene regulation. Upon IFNG binding, IFNGR1 intracellular domain opens out to allow association of downstream signaling components JAK2, JAK1 and STAT1, leading to STAT1 activation, nuclear translocation and transcription of IFNG-regulated genes. Many of the induced genes are transcription factors such as IRF1 that are able to further drive regulation of a next wave of transcription. Plays a role in class I antigen presentation pathway by inducing a replacement of catalytic proteasome subunits with immunoproteasome subunits. In turn, increases the quantity, quality, and repertoire of peptides for class I MHC loading. Increases the efficiency of peptide generation also by inducing the expression of activator PA28 that associates with the proteasome and alters its proteolytic cleavage preference. Up-regulates as well MHC II complexes on the cell surface by promoting expression of several key molecules such as cathepsins B/CTSB, H/CTSH, and L/CTSL. Participates in the regulation of hematopoietic stem cells during development and under homeostatic conditions by affecting their development, quiescence, and differentiation. The sequence is that of Interferon gamma (IFNG) from Sus scrofa (Pig).